Here is a 183-residue protein sequence, read N- to C-terminus: Apo-citrate lyase phosphoribosyl-dephospho-CoA transferase (183 aa).

The protein belongs to the CitX family.

The enzyme catalyses apo-[citrate lyase ACP] + 2'-(5''-triphospho-alpha-D-ribosyl)-3'-dephospho-CoA = holo-[citrate lyase ACP] + diphosphate. Its function is as follows. Transfers 2-(5''-triphosphoribosyl)-3'-dephosphocoenzyme-A on a serine residue to the apo-acyl carrier protein (gamma chain) of the citrate lyase to yield holo-acyl carrier protein. In Escherichia coli O6:K15:H31 (strain 536 / UPEC), this protein is Apo-citrate lyase phosphoribosyl-dephospho-CoA transferase.